The primary structure comprises 683 residues: Synaptic vesicle glycoprotein 2B (683 aa).

Over residues 1–10 the composition is skewed to basic and acidic residues; sequence MDDYRYRDNY. Residues 1-73 form a disordered region; it reads MDDYRYRDNY…TKMAPSRADG (73 aa). Over 1-110 the chain is Cytoplasmic; sequence MDDYRYRDNY…ECGHGRFQWT (110 aa). Phosphoserine is present on S33. T36 is subject to Phosphothreonine. Residues 111–131 form a helical membrane-spanning segment; sequence LFFVLGLALMADGVEIFVVSF. Residues 132 to 148 lie on the Extracellular side of the membrane; sequence ALPSAEKDMCLSSSKKG. The helical transmembrane segment at 149-169 threads the bilayer; the sequence is MLGLIVYLGMMAGAFILGGLA. The Cytoplasmic segment spans residues 170–182; it reads DKLGRKKVLSMSL. Residues 183–203 form a helical membrane-spanning segment; sequence AINASFASLSSFVQGYGAFLF. Over 204–205 the chain is Extracellular; sequence CR. The chain crosses the membrane as a helical span at residues 206-226; it reads LISGIGIGGSLPIVFAYFSEF. Residues 227 to 237 lie on the Cytoplasmic side of the membrane; that stretch reads LSREKRGEHLS. A helical transmembrane segment spans residues 238-258; the sequence is WLGIFWMTGGIYASAMAWSII. Residues 259–277 are Extracellular-facing; the sequence is PHYGWGFSMGTNYHFHSWR. A helical membrane pass occupies residues 278-298; sequence VFVIVCALPATVSMVALKFMP. The Cytoplasmic portion of the chain corresponds to 299 to 390; that stretch reads ESPRFLLEMG…CVMGPYRMNT (92 aa). The helical transmembrane segment at 391-411 threads the bilayer; the sequence is LILAVVWFTMALSYYGLTVWF. Residues 412–535 are Extracellular-facing; the sequence is PDMIRYFQDE…CHMDFEEDND (124 aa). Y423 bears the Phosphotyrosine mark. N441, N491, and N516 each carry an N-linked (GlcNAc...) asparagine glycan. Residues 536 to 556 form a helical membrane-spanning segment; sequence FLIYLVSFLGSLSVLPGNIIS. Topologically, residues 557 to 565 are cytoplasmic; sequence ALLMDRIGR. A helical transmembrane segment spans residues 566–586; that stretch reads LKMIGGSMLISAVCCFFLFFG. The Extracellular portion of the chain corresponds to 587-592; it reads NSESAM. Residues 593-613 form a helical membrane-spanning segment; that stretch reads IGWQCLFCGTSIAAWNALDVI. Over 614 to 626 the chain is Cytoplasmic; that stretch reads TVELYPTNQRATA. A helical membrane pass occupies residues 627-649; it reads FGILNGLCKFGAILGNTIFASFV. Over 650-653 the chain is Extracellular; it reads GITK. The helical transmembrane segment at 654–672 threads the bilayer; sequence VVPILLAAASLVGGGLIAL. Residues 673 to 683 are Cytoplasmic-facing; that stretch reads RLPETREQVLM.

This sequence belongs to the major facilitator superfamily. As to quaternary structure, interacts with SYT1 in a calcium-independent manner. Forms a complex with SYT1, syntaxin-1 and SNAP25. (Microbial infection) Interacts with C.botulinum neurotoxin type A (BoNT/A, botA). In terms of assembly, (Microbial infection) Interacts with C.botulinum neurotoxin type D (BoNT/D, botD). No evidence for its interaction with BoNT/D has also been published. In terms of processing, N-glycosylated. The N-terminal cytoplasmic domain is phosphorylated by CK1. In terms of tissue distribution, expressed in ribbon synapses of the retina (at protein level). Expressed in diaphragm motor nerve terminals (at protein level). Expressed in hippocampus neurons (at protein level).

The protein localises to the cytoplasmic vesicle. It is found in the secretory vesicle. It localises to the synaptic vesicle membrane. The protein resides in the acrosome. Functionally, probably plays a role in the control of regulated secretion in neural and endocrine cells. (Microbial infection) Receptor for C.botulinum neurotoxin type A (BoNT/A, botA); the toxin probably binds via extracellular loop 4. In terms of biological role, (Microbial infection) Possible receptor for C.botulinum neurotoxin type D (BoNT/D, botD). Not a receptor for C.botulinum neurotoxin type D (BoNT/D, botD). Its function is as follows. (Microbial infection) Receptor for C.botulinum neurotoxin type E (BoNT/E); the toxin probably binds via extracellular loop 4. It probably requires glycosylation of Asn-516. In Mus musculus (Mouse), this protein is Synaptic vesicle glycoprotein 2B (Sv2b).